The chain runs to 512 residues: Maturase K (512 aa).

The protein belongs to the intron maturase 2 family. MatK subfamily.

It is found in the plastid. It localises to the chloroplast. Usually encoded in the trnK tRNA gene intron. Probably assists in splicing its own and other chloroplast group II introns. The chain is Maturase K from Amorphophallus titanum (Titan arum).